A 142-amino-acid polypeptide reads, in one-letter code: Hemoglobin subunit alpha-A (142 aa).

The 141-residue stretch at 2-142 (VLSAADKGNV…VATVLTAKYR (141 aa)) folds into the Globin domain. H59 contributes to the O2 binding site. H88 contacts heme b.

Belongs to the globin family. Heterotetramer of two alpha chains and two beta chains. In terms of tissue distribution, red blood cells.

Its function is as follows. Involved in oxygen transport from the lung to the various peripheral tissues. This Anseranas semipalmata (Magpie goose) protein is Hemoglobin subunit alpha-A (HBAA).